We begin with the raw amino-acid sequence, 886 residues long: MQDKYNHLDVERSAQAQWIAADAYRVTEDTSGKKPRGKYYACSMLPYPSGKLHMGHVRNYTINDMLTRYLRMKGYNVLMPMGWDAFGLPAENAAMKNGVPPAQWTYDNIAYMKKQMQAMGLAIDWSREVATCDPSYYKWNQWLFLKMLEKGIAYRKTQVVNWDPVDQTVLANEQVIDGKGWRTGATVEKREIPGYYLKITDYAEELLGHVQHQLPGWPERVRLMQENWIGKSEGVRFAFTHDIRDASGALIGGGKMYVFTTRADTIMGVTFCAVAPEHPLALHAAALNPQLAAFIEECKAGGTTEAELATQEKKGKPTGLFVTHPLTGEQVEVWVGNYVLMSYGDGAVMGVPAHDERDFEFAKKYGLPIKQVTDVKGQAYSLEAWADWYGDKQQGVAINSDKYDGLGLKACVDAVAADLAAKGLGEKKTTWRLRDWGVSRQRYWGTPIPIIHCDEHGAVPVPEKDLPVVLPQDCVPDGSGNPLHRHEGFHAGVVCPVCGKPARRETDTMDTFVDSSWYYMRYCDPKNDQQMVAGGADYWMPMDQYIGGIEHAILHLLYARFWTKVMRDLGLVKIDEPFTKLLTQGMVLNHIYSRKGDKGGIEYFWPSEVEDIHDAAGKVTGAKRKSDGLLVNYEGVGTMSKSKNNGVDPQDLIERYGADTARLYTMFTAPPEATLEWNDAAVEGSYRFLRRVWNFGVKLSAAKTAAAAAQAAGFVAEYGKEAKELRREIHTVLKQIDYDYQRMQYNTVVSGNMKLLNALENFTNDGAAGSHKALHESFGILLRCLYPATPHLAHALWSELGYAAQQGDLLDAPWPEVDSGALQQDVIELVLQVNGKLRGSVTVPAGADKATIEAAALASEAFLKQAAGAPAKKVIVVPGRLVNIVV.

Residues 46-56 carry the 'HIGH' region motif; the sequence is PYPSGKLHMGH. The 'KMSKS' region motif lies at 638-642; the sequence is TMSKS. Residue Lys-641 coordinates ATP.

Belongs to the class-I aminoacyl-tRNA synthetase family.

It is found in the cytoplasm. The catalysed reaction is tRNA(Leu) + L-leucine + ATP = L-leucyl-tRNA(Leu) + AMP + diphosphate. The sequence is that of Leucine--tRNA ligase from Polaromonas sp. (strain JS666 / ATCC BAA-500).